The sequence spans 517 residues: Protein NETWORKED 4B (517 aa).

2 disordered regions span residues 1–29 (MASSTAQSKKQFKRSMTKKSHSWWWDSHN) and 101–159 (LQKN…EDGD). A compositionally biased stretch (basic residues) spans 10–21 (KQFKRSMTKKSH). Positions 21–101 (HSWWWDSHNC…ERYDQASGEL (81 aa)) constitute an NAB domain. The segment covering 107-119 (SEIQSQSSLEISS) has biased composition (low complexity). Over residues 121-135 (TKEKLSRRQSSHKEE) the composition is skewed to basic and acidic residues. Positions 156–486 (EDGDEALIRR…EQKREAIRQL (331 aa)) form a coiled coil.

This sequence belongs to the NET family.

Functionally, plant-specific actin binding protein. May be part of a membrane-cytoskeletal adapter complex. This chain is Protein NETWORKED 4B, found in Arabidopsis thaliana (Mouse-ear cress).